The chain runs to 360 residues: Uroporphyrinogen decarboxylase (360 aa).

Residues 31-35 (RQAGR), Asp81, Tyr157, Thr212, and His333 contribute to the substrate site.

The protein belongs to the uroporphyrinogen decarboxylase family. In terms of assembly, homodimer.

Its subcellular location is the cytoplasm. It catalyses the reaction uroporphyrinogen III + 4 H(+) = coproporphyrinogen III + 4 CO2. It participates in porphyrin-containing compound metabolism; protoporphyrin-IX biosynthesis; coproporphyrinogen-III from 5-aminolevulinate: step 4/4. Catalyzes the decarboxylation of four acetate groups of uroporphyrinogen-III to yield coproporphyrinogen-III. This chain is Uroporphyrinogen decarboxylase, found in Herminiimonas arsenicoxydans.